A 1571-amino-acid chain; its full sequence is Pentafunctional AROM polypeptide 2 (1571 aa).

A 3-dehydroquinate synthase region spans residues 1–380 (MAEPTKISIL…YEPKASVVSN (380 aa)). NAD(+) contacts are provided by residues 44 to 46 (DTN), 81 to 84 (ENSK), 112 to 114 (GGV), and Asp117. 7-phospho-2-dehydro-3-deoxy-D-arabino-heptonate is bound at residue Arg128. 137–138 (TT) is an NAD(+) binding site. 7-phospho-2-dehydro-3-deoxy-D-arabino-heptonate is bound by residues Asp144 and Lys150. Residue Lys159 coordinates NAD(+). Residue Asn160 participates in 7-phospho-2-dehydro-3-deoxy-D-arabino-heptonate binding. Residues 177–180 (FIDT) and Asn188 each bind NAD(+). Residue Glu192 coordinates Zn(2+). Residues 192–195 (EVIK) and Lys246 each bind 7-phospho-2-dehydro-3-deoxy-D-arabino-heptonate. Catalysis depends on Glu256, which acts as the Proton acceptor; for 3-dehydroquinate synthase activity. 7-phospho-2-dehydro-3-deoxy-D-arabino-heptonate is bound by residues 260–264 (RNLLN) and His267. His267 serves as a coordination point for Zn(2+). His271 (proton acceptor; for 3-dehydroquinate synthase activity) is an active-site residue. 7-phospho-2-dehydro-3-deoxy-D-arabino-heptonate-binding residues include His283 and Lys352. Residue His283 coordinates Zn(2+). The segment at 393–838 (VIPGVPKNLN…WDALKQKFGV (446 aa)) is EPSP synthase. Catalysis depends on Cys820, which acts as the For EPSP synthase activity. The shikimate kinase stretch occupies residues 859–1051 (NASIIIIGMR…RKKHLSFFVS (193 aa)). 866–873 (GMRGAGKT) is a binding site for ATP. The 3-dehydroquinase stretch occupies residues 1052 to 1273 (LTLPDLRESG…AAPGQLSAAE (222 aa)). His1175 functions as the Proton acceptor; for 3-dehydroquinate dehydratase activity in the catalytic mechanism. Residue Lys1203 is the Schiff-base intermediate with substrate; for 3-dehydroquinate dehydratase activity of the active site. The tract at residues 1286-1571 (AKKFAVLGKP…NAVLGTNETK (286 aa)) is shikimate dehydrogenase.

The protein in the N-terminal section; belongs to the sugar phosphate cyclases superfamily. Dehydroquinate synthase family. It in the 2nd section; belongs to the EPSP synthase family. This sequence in the 3rd section; belongs to the shikimate kinase family. In the 4th section; belongs to the type-I 3-dehydroquinase family. The protein in the C-terminal section; belongs to the shikimate dehydrogenase family. As to quaternary structure, homodimer. Zn(2+) serves as cofactor.

Its subcellular location is the cytoplasm. The catalysed reaction is 7-phospho-2-dehydro-3-deoxy-D-arabino-heptonate = 3-dehydroquinate + phosphate. The enzyme catalyses 3-dehydroquinate = 3-dehydroshikimate + H2O. It catalyses the reaction shikimate + NADP(+) = 3-dehydroshikimate + NADPH + H(+). It carries out the reaction shikimate + ATP = 3-phosphoshikimate + ADP + H(+). The catalysed reaction is 3-phosphoshikimate + phosphoenolpyruvate = 5-O-(1-carboxyvinyl)-3-phosphoshikimate + phosphate. The protein operates within metabolic intermediate biosynthesis; chorismate biosynthesis; chorismate from D-erythrose 4-phosphate and phosphoenolpyruvate: step 2/7. It participates in metabolic intermediate biosynthesis; chorismate biosynthesis; chorismate from D-erythrose 4-phosphate and phosphoenolpyruvate: step 3/7. Its pathway is metabolic intermediate biosynthesis; chorismate biosynthesis; chorismate from D-erythrose 4-phosphate and phosphoenolpyruvate: step 4/7. It functions in the pathway metabolic intermediate biosynthesis; chorismate biosynthesis; chorismate from D-erythrose 4-phosphate and phosphoenolpyruvate: step 5/7. The protein operates within metabolic intermediate biosynthesis; chorismate biosynthesis; chorismate from D-erythrose 4-phosphate and phosphoenolpyruvate: step 6/7. Functionally, the AROM polypeptide catalyzes 5 consecutive enzymatic reactions in prechorismate polyaromatic amino acid biosynthesis. In Talaromyces marneffei (strain ATCC 18224 / CBS 334.59 / QM 7333) (Penicillium marneffei), this protein is Pentafunctional AROM polypeptide 2.